The sequence spans 630 residues: Glutamyl-tRNA(Gln) amidotransferase subunit E (630 aa).

It belongs to the GatB/GatE family. GatE subfamily. Heterodimer of GatD and GatE.

The catalysed reaction is L-glutamyl-tRNA(Gln) + L-glutamine + ATP + H2O = L-glutaminyl-tRNA(Gln) + L-glutamate + ADP + phosphate + H(+). Allows the formation of correctly charged Gln-tRNA(Gln) through the transamidation of misacylated Glu-tRNA(Gln) in organisms which lack glutaminyl-tRNA synthetase. The reaction takes place in the presence of glutamine and ATP through an activated gamma-phospho-Glu-tRNA(Gln). The GatDE system is specific for glutamate and does not act on aspartate. The protein is Glutamyl-tRNA(Gln) amidotransferase subunit E of Methanocaldococcus jannaschii (strain ATCC 43067 / DSM 2661 / JAL-1 / JCM 10045 / NBRC 100440) (Methanococcus jannaschii).